A 199-amino-acid chain; its full sequence is MYIPMVVEQSGRGERAYDIYSRLLKERIIFLGGGIDDQVANLIIAQLLFLEAEDPDKDIHLYINSPGGVVTSGMAIYDTMRYIKAPVSTICVGQAASMGAVLLAAGEKGKRFSLNHSRIMIHQPLGGFQGQATDISIHAKEILRMKEELNSILADLTGQSKERIEADTDRDYFMSATEAEEYGLIDATFTRKPDSGGTP.

Ser-97 acts as the Nucleophile in catalysis. His-122 is a catalytic residue.

This sequence belongs to the peptidase S14 family. In terms of assembly, fourteen ClpP subunits assemble into 2 heptameric rings which stack back to back to give a disk-like structure with a central cavity, resembling the structure of eukaryotic proteasomes.

Its subcellular location is the cytoplasm. The enzyme catalyses Hydrolysis of proteins to small peptides in the presence of ATP and magnesium. alpha-casein is the usual test substrate. In the absence of ATP, only oligopeptides shorter than five residues are hydrolyzed (such as succinyl-Leu-Tyr-|-NHMec, and Leu-Tyr-Leu-|-Tyr-Trp, in which cleavage of the -Tyr-|-Leu- and -Tyr-|-Trp bonds also occurs).. Cleaves peptides in various proteins in a process that requires ATP hydrolysis. Has a chymotrypsin-like activity. Plays a major role in the degradation of misfolded proteins. This is ATP-dependent Clp protease proteolytic subunit from Pelobacter propionicus (strain DSM 2379 / NBRC 103807 / OttBd1).